Consider the following 218-residue polypeptide: MSFFDSYRKKMQMPSKEEVLPGRVQPIPTAAAHFVSGHPLKGPWPDGMKQVLFGMGCFWGAERLFWQVPGVYVTAVGYAGGITPNPTYEETCTGLTGHAEVVLVVYDPKVVTLNELLALFWEEHDPTQGMRQGNDIGTTYRSVIYTFNAVDRAVAEKSRDAYSQALASRGLGPVTTQITDAPDFYYAEDYHQQYLAKNPDGYCGLRGTGVSCPIPLAH.

Cys57 is an active-site residue.

Belongs to the MsrA Met sulfoxide reductase family.

It catalyses the reaction L-methionyl-[protein] + [thioredoxin]-disulfide + H2O = L-methionyl-(S)-S-oxide-[protein] + [thioredoxin]-dithiol. The catalysed reaction is [thioredoxin]-disulfide + L-methionine + H2O = L-methionine (S)-S-oxide + [thioredoxin]-dithiol. Its function is as follows. Has an important function as a repair enzyme for proteins that have been inactivated by oxidation. Catalyzes the reversible oxidation-reduction of methionine sulfoxide in proteins to methionine. The protein is Peptide methionine sulfoxide reductase MsrA of Brucella melitensis biotype 1 (strain ATCC 23456 / CCUG 17765 / NCTC 10094 / 16M).